The chain runs to 673 residues: Pesticin receptor (673 aa).

The first 22 residues, 1–22 (MKMTRLYPLALGGLLLPAIANA), serve as a signal peptide directing secretion. A TonB box motif is present at residues 30–37 (STLVVTAS). The region spanning 41 to 155 (SRSASANNVS…QGGIINIVTQ (115 aa)) is the TBDR plug domain. The TBDR beta-barrel domain maps to 160–672 (TPRGYIEGGV…TVGINTRIDF (513 aa)). The TonB C-terminal box signature appears at 657–673 (QVNMGRTVGINTRIDFF).

Belongs to the TonB-dependent receptor family.

It is found in the cell outer membrane. Functionally, receptor for the bacteriocin pesticin and for the siderophore yersiniabactin. This Yersinia pestis protein is Pesticin receptor (fyuA).